The sequence spans 629 residues: tRNA uridine 5-carboxymethylaminomethyl modification enzyme MnmG (629 aa).

Gly11 to Gly16 lines the FAD pocket. Gly273–Phe287 contributes to the NAD(+) binding site.

Belongs to the MnmG family. As to quaternary structure, homodimer. Heterotetramer of two MnmE and two MnmG subunits. FAD is required as a cofactor.

Its subcellular location is the cytoplasm. Functionally, NAD-binding protein involved in the addition of a carboxymethylaminomethyl (cmnm) group at the wobble position (U34) of certain tRNAs, forming tRNA-cmnm(5)s(2)U34. The polypeptide is tRNA uridine 5-carboxymethylaminomethyl modification enzyme MnmG (Mycoplasma mycoides subsp. mycoides SC (strain CCUG 32753 / NCTC 10114 / PG1)).